The following is a 745-amino-acid chain: Polyribonucleotide nucleotidyltransferase (745 aa).

The Mg(2+) site is built by aspartate 487 and aspartate 493. A KH domain is found at 554 to 613 (PSSTTVKIDKDKIKDIIGPGGKIIKEICETSNAKIDISDDGTVSIYASDRDKIKIALDKI). Positions 623-691 (GEIFNGTVMK…NKGKAKLTIK (69 aa)) constitute an S1 motif domain. Residues 693–732 (AYKDHSSNNTKQKNNVKDDSESEQRRDTSKKRTWNEDNNT) form a disordered region. Positions 707 to 719 (NVKDDSESEQRRD) are enriched in basic and acidic residues.

This sequence belongs to the polyribonucleotide nucleotidyltransferase family. Requires Mg(2+) as cofactor.

Its subcellular location is the cytoplasm. The enzyme catalyses RNA(n+1) + phosphate = RNA(n) + a ribonucleoside 5'-diphosphate. Its function is as follows. Involved in mRNA degradation. Catalyzes the phosphorolysis of single-stranded polyribonucleotides processively in the 3'- to 5'-direction. The sequence is that of Polyribonucleotide nucleotidyltransferase from Rickettsia prowazekii (strain Madrid E).